Consider the following 216-residue polypeptide: Nucleoside triphosphate pyrophosphatase (216 aa).

The Proton acceptor role is filled by aspartate 82.

The protein belongs to the Maf family. A divalent metal cation is required as a cofactor.

It localises to the cytoplasm. The enzyme catalyses a ribonucleoside 5'-triphosphate + H2O = a ribonucleoside 5'-phosphate + diphosphate + H(+). It carries out the reaction a 2'-deoxyribonucleoside 5'-triphosphate + H2O = a 2'-deoxyribonucleoside 5'-phosphate + diphosphate + H(+). Nucleoside triphosphate pyrophosphatase. May have a dual role in cell division arrest and in preventing the incorporation of modified nucleotides into cellular nucleic acids. This chain is Nucleoside triphosphate pyrophosphatase, found in Mycobacterium ulcerans (strain Agy99).